Consider the following 125-residue polypeptide: Large ribosomal subunit protein bL12 (125 aa).

Belongs to the bacterial ribosomal protein bL12 family. As to quaternary structure, homodimer. Part of the ribosomal stalk of the 50S ribosomal subunit. Forms a multimeric L10(L12)X complex, where L10 forms an elongated spine to which 2 to 4 L12 dimers bind in a sequential fashion. Binds GTP-bound translation factors.

Forms part of the ribosomal stalk which helps the ribosome interact with GTP-bound translation factors. Is thus essential for accurate translation. The chain is Large ribosomal subunit protein bL12 from Caldanaerobacter subterraneus subsp. tengcongensis (strain DSM 15242 / JCM 11007 / NBRC 100824 / MB4) (Thermoanaerobacter tengcongensis).